We begin with the raw amino-acid sequence, 198 residues long: Recombination protein RecR (198 aa).

The C4-type zinc finger occupies 57–72 (CRQCRTLSEEELCPQC). The Toprim domain maps to 80–174 (SLLCVVEGPL…TLSRIAHGVP (95 aa)).

Belongs to the RecR family.

Its function is as follows. May play a role in DNA repair. It seems to be involved in an RecBC-independent recombinational process of DNA repair. It may act with RecF and RecO. The polypeptide is Recombination protein RecR (Pseudomonas aeruginosa (strain LESB58)).